The primary structure comprises 170 residues: Probable deoxyuridine 5'-triphosphate nucleotidohydrolase (170 aa).

It belongs to the dCTP deaminase family. Archaeal dUTPase subfamily.

The catalysed reaction is dUTP + H2O = dUMP + diphosphate + H(+). It participates in pyrimidine metabolism; dUMP biosynthesis; dUMP from dCTP (dUTP route): step 2/2. Functionally, this enzyme is involved in nucleotide metabolism: it produces dUMP, the immediate precursor of thymidine nucleotides and it decreases the intracellular concentration of dUTP so that uracil cannot be incorporated into DNA. The sequence is that of Probable deoxyuridine 5'-triphosphate nucleotidohydrolase from Methanococcoides burtonii (strain DSM 6242 / NBRC 107633 / OCM 468 / ACE-M).